The chain runs to 207 residues: Putative 3-methyladenine DNA glycosylase (207 aa).

This sequence belongs to the DNA glycosylase MPG family.

In Listeria monocytogenes serovar 1/2a (strain ATCC BAA-679 / EGD-e), this protein is Putative 3-methyladenine DNA glycosylase.